We begin with the raw amino-acid sequence, 466 residues long: Ribulose bisphosphate carboxylase large chain (466 aa).

An N6,N6,N6-trimethyllysine modification is found at K5. 2 residues coordinate substrate: N114 and T164. The Proton acceptor role is filled by K166. K168 contributes to the substrate binding site. Positions 192, 194, and 195 each coordinate Mg(2+). N6-carboxylysine is present on K192. Residue H285 is the Proton acceptor of the active site. Residues R286, H318, and S370 each coordinate substrate.

It belongs to the RuBisCO large chain family. Type I subfamily. Heterohexadecamer of 8 large chains and 8 small chains. The cofactor is Mg(2+).

The protein resides in the plastid. Its subcellular location is the chloroplast. It carries out the reaction 2 (2R)-3-phosphoglycerate + 2 H(+) = D-ribulose 1,5-bisphosphate + CO2 + H2O. The enzyme catalyses D-ribulose 1,5-bisphosphate + O2 = 2-phosphoglycolate + (2R)-3-phosphoglycerate + 2 H(+). RuBisCO catalyzes two reactions: the carboxylation of D-ribulose 1,5-bisphosphate, the primary event in carbon dioxide fixation, as well as the oxidative fragmentation of the pentose substrate in the photorespiration process. Both reactions occur simultaneously and in competition at the same active site. This is Ribulose bisphosphate carboxylase large chain from Cornus kousa (Kousa dogwood).